Consider the following 141-residue polypeptide: Large ribosomal subunit protein uL11 (141 aa).

This sequence belongs to the universal ribosomal protein uL11 family. Part of the ribosomal stalk of the 50S ribosomal subunit. Interacts with L10 and the large rRNA to form the base of the stalk. L10 forms an elongated spine to which L12 dimers bind in a sequential fashion forming a multimeric L10(L12)X complex. In terms of processing, one or more lysine residues are methylated.

Forms part of the ribosomal stalk which helps the ribosome interact with GTP-bound translation factors. This chain is Large ribosomal subunit protein uL11, found in Clostridium botulinum (strain Alaska E43 / Type E3).